Here is a 465-residue protein sequence, read N- to C-terminus: tRNA modification GTPase MnmE (465 aa).

Residues R21, E85, and K124 each coordinate (6S)-5-formyl-5,6,7,8-tetrahydrofolate. Positions 220-387 constitute a TrmE-type G domain; that stretch reads GVPVAIIGET…LQKMLINAAH (168 aa). N230 contacts K(+). GTP contacts are provided by residues 230–235, 249–255, 274–277, and 337–340; these read NAGKST, SDIHGTT, DTAG, and NKAD. Residue S234 participates in Mg(2+) binding. Positions 249, 251, and 254 each coordinate K(+). T255 is a binding site for Mg(2+). Position 465 (K465) interacts with (6S)-5-formyl-5,6,7,8-tetrahydrofolate.

Belongs to the TRAFAC class TrmE-Era-EngA-EngB-Septin-like GTPase superfamily. TrmE GTPase family. In terms of assembly, homodimer. Heterotetramer of two MnmE and two MnmG subunits. Requires K(+) as cofactor.

The protein resides in the cytoplasm. Exhibits a very high intrinsic GTPase hydrolysis rate. Involved in the addition of a carboxymethylaminomethyl (cmnm) group at the wobble position (U34) of certain tRNAs, forming tRNA-cmnm(5)s(2)U34. The protein is tRNA modification GTPase MnmE of Bacteroides thetaiotaomicron (strain ATCC 29148 / DSM 2079 / JCM 5827 / CCUG 10774 / NCTC 10582 / VPI-5482 / E50).